The sequence spans 254 residues: Major prion protein (254 aa).

The N-terminal stretch at 1 to 22 (MANLGYWLLALFVTMWTDVGLC) is a signal peptide. Residues 23–38 (KKRPKPGGWNTGGSRY) are interaction with ADGRG6. The interaction with GRB2, ERI3 and SYN1 stretch occupies residues 23–231 (KKRPKPGGWN…QAYYDGRRSS (209 aa)). The disordered stretch occupies residues 25-104 (RPKPGGWNTG…HNQWNKPSKP (80 aa)). Proline 44 carries the hydroxyproline modification. 5 consecutive repeat copies span residues 51–58 (PQGGTWGQ), 59–66 (PHGGGWGQ), 67–74 (PHGGSWGQ), 75–82 (PHGGSWGQ), and 83–90 (PHGGGWGQ). The segment at 51–90 (PQGGTWGQPHGGGWGQPHGGSWGQPHGGSWGQPHGGGWGQ) is 5 X 8 AA tandem repeats of P-H-G-G-G-W-G-Q. Residues 54 to 94 (GTWGQPHGGGWGQPHGGSWGQPHGGSWGQPHGGGWGQGGGT) show a composition bias toward gly residues. 12 residues coordinate Cu(2+): histidine 60, glycine 61, glycine 62, histidine 68, glycine 69, glycine 70, histidine 76, glycine 77, glycine 78, histidine 84, glycine 85, and glycine 86. Cysteine 178 and cysteine 213 form a disulfide bridge. N-linked (GlcNAc...) asparagine glycosylation is found at asparagine 180 and asparagine 196. Serine 230 is lipidated: GPI-anchor amidated serine. Residues 231 to 254 (SSTVLFSSPPVILLISFLIFLIVG) constitute a propeptide, removed in mature form.

This sequence belongs to the prion family. Monomer and homodimer. Has a tendency to aggregate into amyloid fibrils containing a cross-beta spine, formed by a steric zipper of superposed beta-strands. Soluble oligomers may represent an intermediate stage on the path to fibril formation. Copper binding may promote oligomerization. Interacts with GRB2, APP, ERI3/PRNPIP and SYN1. Mislocalized cytosolically exposed PrP interacts with MGRN1; this interaction alters MGRN1 subcellular location and causes lysosomal enlargement. Interacts with APP. Interacts with KIAA1191. Interacts with ADGRG6. In terms of processing, N-glycosylated. Highly expressed in the brain, lung, kidney and heart. Expressed at low levels in the liver and spleen.

It is found in the cell membrane. Its subcellular location is the golgi apparatus. In terms of biological role, its primary physiological function is unclear. May play a role in neuronal development and synaptic plasticity. May be required for neuronal myelin sheath maintenance. May promote myelin homeostasis through acting as an agonist for ADGRG6 receptor. May play a role in iron uptake and iron homeostasis. Soluble oligomers are toxic to cultured neuroblastoma cells and induce apoptosis (in vitro). Association with GPC1 (via its heparan sulfate chains) targets PRNP to lipid rafts. Also provides Cu(2+) or Zn(2+) for the ascorbate-mediated GPC1 deaminase degradation of its heparan sulfate side chains. The chain is Major prion protein (Prnp) from Mus musculus (Mouse).